The sequence spans 364 residues: Uroporphyrinogen decarboxylase (364 aa).

Coproporphyrinogen I contacts are provided by Arg34, Ala36, Arg38, Arg47, Asp83, Tyr161, Ser216, and His336. The coproporphyrinogen III site is built by Arg34, Ala36, and Arg38. The coproporphyrinogen III site is built by Asp83, Tyr161, Ser216, and His336.

This sequence belongs to the uroporphyrinogen decarboxylase family. In terms of assembly, homodimer.

It localises to the cytoplasm. Its subcellular location is the cytosol. The catalysed reaction is uroporphyrinogen III + 4 H(+) = coproporphyrinogen III + 4 CO2. It catalyses the reaction uroporphyrinogen I + 4 H(+) = coproporphyrinogen I + 4 CO2. Its pathway is porphyrin-containing compound metabolism; protoporphyrin-IX biosynthesis; coproporphyrinogen-III from 5-aminolevulinate: step 4/4. Catalyzes the sequential decarboxylation of the four acetate side chains of uroporphyrinogen to form coproporphyrinogen and participates in the fifth step in the heme biosynthetic pathway. Isomer I or isomer III of uroporphyrinogen may serve as substrate, but only coproporphyrinogen III can ultimately be converted to heme. In vitro also decarboxylates pentacarboxylate porphyrinogen I. The sequence is that of Uroporphyrinogen decarboxylase from Rattus norvegicus (Rat).